The sequence spans 277 residues: Elongation factor Ts (277 aa).

Positions 79–82 are involved in Mg(2+) ion dislocation from EF-Tu; sequence TDFV.

It belongs to the EF-Ts family.

The protein resides in the cytoplasm. In terms of biological role, associates with the EF-Tu.GDP complex and induces the exchange of GDP to GTP. It remains bound to the aminoacyl-tRNA.EF-Tu.GTP complex up to the GTP hydrolysis stage on the ribosome. The protein is Elongation factor Ts of Phytoplasma australiense.